A 250-amino-acid chain; its full sequence is Exotoxin type A (250 aa).

Residues 1 to 30 (MENNKEVLKKMVFFVLMKFLGLTILPKGIC) form the signal peptide. A disulfide bridge links Cys-117 with Cys-128.

Belongs to the staphylococcal/streptococcal toxin family.

Functionally, causative agent of the symptoms associated with scarlet fever, have been associated with streptococcal toxic shock-like disease and may play a role in the early events of rheumatic fever. The sequence is that of Exotoxin type A (speA) from Streptococcus pyogenes.